We begin with the raw amino-acid sequence, 389 residues long: GDP-fucose protein O-fucosyltransferase 1 (389 aa).

The N-terminal stretch at 1-21 (MRVSKVLTLASFISVCSYSEA) is a signal peptide. A glycan (N-linked (GlcNAc...) asparagine) is linked at N24. C35 and C37 are joined by a disulfide. A substrate-binding site is contributed by 40–43 (RFGN). A disulfide bond links C119 and C135. A substrate-binding site is contributed by 238–240 (HLR). Cystine bridges form between C249-C281 and C266-C353. Residue 356–357 (TF) participates in substrate binding.

Belongs to the glycosyltransferase 65 family. In terms of assembly, monomer.

It is found in the endoplasmic reticulum. The catalysed reaction is L-seryl-[protein] + GDP-beta-L-fucose = 3-O-(alpha-L-fucosyl)-L-seryl-[protein] + GDP + H(+). The enzyme catalyses L-threonyl-[protein] + GDP-beta-L-fucose = 3-O-(alpha-L-fucosyl)-L-threonyl-[protein] + GDP + H(+). It participates in protein modification; protein glycosylation. Functionally, catalyzes the reaction that attaches fucose through an O-glycosidic linkage to a conserved serine or threonine residue found in the consensus sequence C2-X(4,5)-[S/T]-C3 of EGF domains, where C2 and C3 are the second and third conserved cysteines. Specifically uses GDP-fucose as donor substrate and proper disulfide pairing of the substrate EGF domains is required for fucose transfer. The sequence is that of GDP-fucose protein O-fucosyltransferase 1 from Caenorhabditis elegans.